The sequence spans 277 residues: Transport and Golgi organization protein 11 (277 aa).

Residues Met-1–Lys-256 lie on the Cytoplasmic side of the membrane. Disordered stretches follow at residues His-124 to Asp-148 and Val-167 to Gln-200. Residues Ser-127, Ser-129, Ser-132, and Ser-133 each carry the phosphoserine modification. Positions Gly-174 to Gln-200 are enriched in polar residues. The residue at position 177 (Thr-177) is a Phosphothreonine. 3 positions are modified to phosphoserine: Ser-179, Ser-182, and Ser-190. A phosphothreonine mark is found at Thr-216 and Thr-222. The stretch at Glu-225 to Gln-253 forms a coiled coil. The helical; Anchor for type IV membrane protein transmembrane segment at Ile-257–Leu-274 threads the bilayer. The Lumenal segment spans residues Asn-275 to Asn-277.

It belongs to the Tango11 family.

It localises to the endoplasmic reticulum membrane. The protein resides in the mitochondrion outer membrane. Its subcellular location is the peroxisome. Its function is as follows. May play a role in mitochondrial and peroxisomal fission. The sequence is that of Transport and Golgi organization protein 11 (Tango11) from Drosophila melanogaster (Fruit fly).